The primary structure comprises 316 residues: MKTSVVILAMSYITSIFANNSYDFCDGEFAISEKDDKCGFSFNPCTLYKQIQKEYSNCVILRFYLKAISNMLESICDNNKRCLPFSIDSLYRPLYNREQFKHKHHHTLYALFRNCLYLVNPIYFKEYQDALACNQLDVCYFLIRRTVCPKYGVTKYIECLKKRCEDRFDEKELAIFICDSETFVNIKLEIDACRKICPADCTLDICKIYSLDFWERRDLLKAIFDYHYCHVLSSDNTRDEIIKKIEEIYLNGTERDIKFTSFIIYQLFTDLVACKSSDKNIKRILDLICLYEKKDKCPSGVMVMIEFFVKVCSYQC.

The first 18 residues, 1–18 (MKTSVVILAMSYITSIFA), serve as a signal peptide directing secretion. N-linked (GlcNAc...) asparagine glycans are attached at residues asparagine 19 and asparagine 251.

It localises to the spore. The protein resides in the perispore. This chain is Spore wall protein 30 (SWP32), found in Nosema bombycis (strain CQ1 / CVCC 102059) (Microsporidian parasite).